A 297-amino-acid chain; its full sequence is Protease HtpX homolog (297 aa).

Transmembrane regions (helical) follow at residues 14–34 (VILLFAFFVLLVVIGAAAGYL) and 39–59 (YQLGAAFALIIGAIYAFSMIF). Position 143 (histidine 143) interacts with Zn(2+). Residue glutamate 144 is part of the active site. A Zn(2+)-binding site is contributed by histidine 147. The next 2 helical transmembrane spans lie at 158–178 (IAVALASAVTLISSIGGRMMW) and 193–213 (GFGAIMLIFSILSLILAPLAA). Glutamate 225 lines the Zn(2+) pocket.

This sequence belongs to the peptidase M48B family. Zn(2+) is required as a cofactor.

It is found in the cell membrane. This chain is Protease HtpX homolog, found in Streptococcus equi subsp. zooepidemicus (strain MGCS10565).